Consider the following 140-residue polypeptide: Nucleoside diphosphate kinase (140 aa).

6 residues coordinate ATP: K11, F59, R87, T93, R104, and N114. Residue H117 is the Pros-phosphohistidine intermediate of the active site.

The protein belongs to the NDK family. In terms of assembly, homotetramer. It depends on Mg(2+) as a cofactor.

It localises to the cytoplasm. It carries out the reaction a 2'-deoxyribonucleoside 5'-diphosphate + ATP = a 2'-deoxyribonucleoside 5'-triphosphate + ADP. The enzyme catalyses a ribonucleoside 5'-diphosphate + ATP = a ribonucleoside 5'-triphosphate + ADP. Major role in the synthesis of nucleoside triphosphates other than ATP. The ATP gamma phosphate is transferred to the NDP beta phosphate via a ping-pong mechanism, using a phosphorylated active-site intermediate. The chain is Nucleoside diphosphate kinase from Rhizorhabdus wittichii (strain DSM 6014 / CCUG 31198 / JCM 15750 / NBRC 105917 / EY 4224 / RW1) (Sphingomonas wittichii).